Reading from the N-terminus, the 590-residue chain is Cell division protein FtsZ 1 (590 aa).

Residues 24 to 28 (GGGGN), 111 to 113 (GTG), glutamate 142, arginine 146, and aspartate 190 contribute to the GTP site. Disordered regions lie at residues 346-372 (AAVPAQPQPTVSLQPVPQPQPVQQPLQ) and 524-590 (EATN…RQSS). The segment covering 534 to 546 (AAAPSAASQQRRP) has biased composition (low complexity). The span at 559 to 576 (GQLDDHGRAAPQMRSHED) shows a compositional bias: basic and acidic residues.

Belongs to the FtsZ family. Homodimer. Polymerizes to form a dynamic ring structure in a strictly GTP-dependent manner. Interacts directly with several other division proteins.

It localises to the cytoplasm. Its function is as follows. Essential cell division protein that forms a contractile ring structure (Z ring) at the future cell division site. The regulation of the ring assembly controls the timing and the location of cell division. One of the functions of the FtsZ ring is to recruit other cell division proteins to the septum to produce a new cell wall between the dividing cells. Binds GTP and shows GTPase activity. The sequence is that of Cell division protein FtsZ 1 from Rhizobium meliloti (strain 1021) (Ensifer meliloti).